Reading from the N-terminus, the 491-residue chain is Keratin, type I cytoskeletal 39 (491 aa).

Positions 1-96 (MDTKGCTTTN…WYGEGINSNE (96 aa)) are head. An IF rod domain is found at 96–407 (EKETMQILNE…SLLESSDGKR (312 aa)). Residues 97-131 (KETMQILNERLANYLQKVRMLERENAELESKIQEE) are coil 1A. Positions 132–142 (SNKELPVLCPD) are linker 1. Residues 143 to 243 (YLSYYTTIEE…HKEEINSLQC (101 aa)) form a coil 1B region. Residues 244–259 (QLGERLDIEVTAAPSA) are linker 12. Residues 260-403 (DLNQVLQEMR…TTYRSLLESS (144 aa)) are coil 2. Residues 404–491 (DGKRPCYPRA…PCFIIRPAKV (88 aa)) are tail.

It belongs to the intermediate filament family. In terms of assembly, heterotetramer of two type I and two type II keratins. Expressed in skin and scalp. In the hair follicle, it is present in the upper hair cuticle and the upper cortex. Also present in the in the upper portion of beard hairs (at protein level).

Functionally, may play a role in late hair differentiation. The protein is Keratin, type I cytoskeletal 39 (KRT39) of Homo sapiens (Human).